We begin with the raw amino-acid sequence, 336 residues long: Inositol 2-dehydrogenase (336 aa).

The protein belongs to the Gfo/Idh/MocA family. As to quaternary structure, homotetramer.

It carries out the reaction myo-inositol + NAD(+) = scyllo-inosose + NADH + H(+). Its function is as follows. Involved in the oxidation of myo-inositol (MI) to 2-keto-myo-inositol (2KMI or 2-inosose). In Agrobacterium fabrum (strain C58 / ATCC 33970) (Agrobacterium tumefaciens (strain C58)), this protein is Inositol 2-dehydrogenase.